The primary structure comprises 424 residues: O-methyltransferase aunD (424 aa).

Residue Asp275 coordinates S-adenosyl-L-methionine. The active-site Proton acceptor is His326.

This sequence belongs to the class I-like SAM-binding methyltransferase superfamily. Cation-independent O-methyltransferase family.

Its pathway is secondary metabolite biosynthesis. Functionally, O-methyltransferase; part of the gene cluster that mediates the biosynthesis of aurasperone B, a dimeric gamma-naphthopyrone. The first step in the biosynthesis of aurasperone B is the production of gamma-naphthopyrone precursor YWA1 by the non-reducing polyketide synthase albA, via condensation of one acetyl-CoA starter unit with 6 malonyl-CoA units. YWA1 is then methylated by aunE at position C-6 to yield foncesin which is further methylated at position C-8 by aunD to produce fonsecin B. A key enzyme in the biosynthetic pathway is the cytochrome P450 monooxygenase aunB which catalyzes the oxidative dimerization of fonsecin B to aurasperone B. AunB also catalyzes the oxidative dimerization of rubrofusarin B into aurasperone A. The sequence is that of O-methyltransferase aunD from Aspergillus niger (strain ATCC 1015 / CBS 113.46 / FGSC A1144 / LSHB Ac4 / NCTC 3858a / NRRL 328 / USDA 3528.7).